A 97-amino-acid polypeptide reads, in one-letter code: Nucleoid-associated protein HPAG1_0033 (97 aa).

It belongs to the YbaB/EbfC family. In terms of assembly, homodimer.

It is found in the cytoplasm. Its subcellular location is the nucleoid. Binds to DNA and alters its conformation. May be involved in regulation of gene expression, nucleoid organization and DNA protection. The protein is Nucleoid-associated protein HPAG1_0033 of Helicobacter pylori (strain HPAG1).